The chain runs to 94 residues: C-C motif chemokine 17 (94 aa).

The first 23 residues, 1–23 (MAPLKMLALVILLLGASLQHIHA), serve as a signal peptide directing secretion. 2 disulfide bridges follow: cysteine 33–cysteine 57 and cysteine 34–cysteine 73.

This sequence belongs to the intercrine beta (chemokine CC) family.

Its subcellular location is the secreted. Chemokine, which displays chemotactic activity for T lymphocytes, preferentially Th2 cells, but not monocytes or granulocytes. Therefore plays an important role in a wide range of inflammatory and immunological processes. Acts by binding to CCR4 at T-cell surface. Mediates GM-CSF/CSF2-driven pain and inflammation. In the brain, required to maintain the typical, highly branched morphology of hippocampal microglia under homeostatic conditions. May be important for the appropriate adaptation of microglial morphology and synaptic plasticity to acute lipopolysaccharide (LPS)-induced neuroinflammation. Plays a role in wound healing, mainly by inducing fibroblast migration into the wound. The protein is C-C motif chemokine 17 (CCL17) of Macaca mulatta (Rhesus macaque).